We begin with the raw amino-acid sequence, 401 residues long: Argininosuccinate synthase (401 aa).

ATP-binding positions include 7-15 and A34; that span reads AYSGGLDTS. L-citrulline-binding residues include Y85 and S90. Position 115 (G115) interacts with ATP. L-aspartate is bound by residues T117, N121, and D122. L-citrulline is bound at residue N121. The L-citrulline site is built by R125, S174, S183, E259, and Y271.

Belongs to the argininosuccinate synthase family. Type 1 subfamily. As to quaternary structure, homotetramer.

The protein localises to the cytoplasm. It catalyses the reaction L-citrulline + L-aspartate + ATP = 2-(N(omega)-L-arginino)succinate + AMP + diphosphate + H(+). Its pathway is amino-acid biosynthesis; L-arginine biosynthesis; L-arginine from L-ornithine and carbamoyl phosphate: step 2/3. This Pelotomaculum thermopropionicum (strain DSM 13744 / JCM 10971 / SI) protein is Argininosuccinate synthase.